The primary structure comprises 255 residues: 5-oxoprolinase subunit A (255 aa).

Belongs to the LamB/PxpA family. In terms of assembly, forms a complex composed of PxpA, PxpB and PxpC.

It carries out the reaction 5-oxo-L-proline + ATP + 2 H2O = L-glutamate + ADP + phosphate + H(+). In terms of biological role, catalyzes the cleavage of 5-oxoproline to form L-glutamate coupled to the hydrolysis of ATP to ADP and inorganic phosphate. The polypeptide is 5-oxoprolinase subunit A (Clostridium beijerinckii (strain ATCC 51743 / NCIMB 8052) (Clostridium acetobutylicum)).